We begin with the raw amino-acid sequence, 530 residues long: MDRKGFLDSPSTKILQDLAVAPVDLTTPGIISQERVERFSLSIGGFTLSYATERVDEGVVSALTDLASERGLVSSMQAMQSGEVVNYIDNFPSESRPALHTATRAWVKEIPLTGNAEDIALRSKIEAQRLKDFLHQYRDAFTTIVQIGIGGSELGPKALHRALKGCCPSDKKVYFVSNIDPDNAAEVLQEIDCSKTLVVTVSKSGTTLETAVNEEFIADHFLKQGLHFRDHFIAVTCEGSPMDDRSKYLEVFHIWDSIGGRYSSTSMVGGVVLGFAYGFDVFFQLLEGAAAMDLAALAPQMSENLPMLAAMLGIWNRNFLGYPTSVIVPYSAGLEYFPAHLQQCGMESNGKSIAQTGEIIGFATSPILWGEVGTNSQHSFFQCLHQGSDVIPIEFIGFLDNQRGRDIVISGSTSSQKLFANMVAQSIALAKGRENTNPNKSFRGNRPSSLLVAERLTPYTMGALLAFYEHKIVFQGFCWGINSFDQEGVTLGKDLANQVLGIMQGQAKEGACLEAEALLKLFNSTQKKKS.

E347 (proton donor) is an active-site residue. Catalysis depends on residues H378 and K493.

This sequence belongs to the GPI family.

The protein resides in the cytoplasm. It carries out the reaction alpha-D-glucose 6-phosphate = beta-D-fructose 6-phosphate. It functions in the pathway carbohydrate biosynthesis; gluconeogenesis. The protein operates within carbohydrate degradation; glycolysis; D-glyceraldehyde 3-phosphate and glycerone phosphate from D-glucose: step 2/4. Catalyzes the reversible isomerization of glucose-6-phosphate to fructose-6-phosphate. In Chlamydia abortus (strain DSM 27085 / S26/3) (Chlamydophila abortus), this protein is Glucose-6-phosphate isomerase.